Reading from the N-terminus, the 218-residue chain is MICIPVIDEDMSDAINSAKEALKYGDIVEFRVDLLNNVTFEDITEFSKIPSIITIRAEWEGGAWKKSNEERIELLKHAIKNNAKFVDIELKEEKNLELVKYRNEIRSNTKIIVSYHDFEKTPEIDELIDVVEKELKIGDIAKFATFANSKEDTLKILNLMNKYYGKIIAIGMGESGKLTRILGLDFGSILTFASMEGKASAPGQVDVKKLKEILELIE.

3-dehydroquinate contacts are provided by residues 29-31 and Arg56; that span reads EFR. His116 functions as the Proton donor/acceptor in the catalytic mechanism. Lys142 serves as the catalytic Schiff-base intermediate with substrate. 3-dehydroquinate is bound by residues Arg180, Ser200, and Gln204.

The protein belongs to the type-I 3-dehydroquinase family. Homodimer.

The enzyme catalyses 3-dehydroquinate = 3-dehydroshikimate + H2O. Its pathway is metabolic intermediate biosynthesis; chorismate biosynthesis; chorismate from D-erythrose 4-phosphate and phosphoenolpyruvate: step 3/7. In terms of biological role, involved in the third step of the chorismate pathway, which leads to the biosynthesis of aromatic amino acids. Catalyzes the cis-dehydration of 3-dehydroquinate (DHQ) and introduces the first double bond of the aromatic ring to yield 3-dehydroshikimate. The protein is 3-dehydroquinate dehydratase of Methanococcus maripaludis (strain C5 / ATCC BAA-1333).